The following is a 163-amino-acid chain: UPF0478 protein SERP1299 (163 aa).

Residues 7-27 (IAGIIAAIAFLILCIGIVVVL) form a helical membrane-spanning segment.

The protein belongs to the UPF0478 family.

The protein resides in the cell membrane. The polypeptide is UPF0478 protein SERP1299 (Staphylococcus epidermidis (strain ATCC 35984 / DSM 28319 / BCRC 17069 / CCUG 31568 / BM 3577 / RP62A)).